A 1000-amino-acid polypeptide reads, in one-letter code: Receptor-type tyrosine-protein kinase FLT3 (1000 aa).

An N-terminal signal peptide occupies residues 1 to 27 (MRALAQRSDRRLLLLVVLSVMILETVT). Residues 28–544 (NQDLPVIKCV…PFPFIQDNIS (517 aa)) lie on the Extracellular side of the membrane. 2 disulfides stabilise this stretch: C36/C66 and C104/C115. N44 carries an N-linked (GlcNAc...) asparagine glycan. A disordered region spans residues 45–67 (GSSAGKPSSYRMVRGSPEDLQCT). N-linked (GlcNAc...) asparagine glycans are attached at residues N133 and N152. Intrachain disulfides connect C200-C207 and C273-C331. An Ig-like C2-type domain is found at 254–344 (PQSTLPQLFL…KHPSQSALVT (91 aa)). N-linked (GlcNAc...) asparagine glycosylation is found at N307, N324, and N352. 2 disulfide bridges follow: C369–C408 and C382–C393. N-linked (GlcNAc...) asparagine glycans are attached at residues N445, N474, N503, and N542. A helical membrane pass occupies residues 545-564 (FYATIGLCLPFIVVLIVLIC). Over 565 to 992 (HKYKKQFRYE…GSEPPSPQAQ (428 aa)) the chain is Cytoplasmic. Y573 carries the phosphotyrosine modification. S575 is modified (phosphoserine). A phosphotyrosine; by autocatalysis mark is found at Y590 and Y592. Positions 592–598 (YVDFRDY) are important for normal regulation of the kinase activity and for maintaining the kinase in an inactive state in the absence of ligand binding. Position 600 is a phosphotyrosine (Y600). Residues 611–946 (LEFGKVLGSG…PSFPNLTSFL (336 aa)) enclose the Protein kinase domain. Residues 617–625 (LGSGAFGRV) and K645 contribute to the ATP site. Y727 bears the Phosphotyrosine; by autocatalysis mark. S760 is modified (phosphoserine). Phosphotyrosine is present on residues Y769 and Y796. Residue D814 is the Proton acceptor of the active site. Position 845 is a phosphotyrosine; by autocatalysis (Y845). A phosphotyrosine mark is found at Y958 and Y972. The tract at residues 968–1000 (HPSIYQNRRPLSREAGSEPPSPQAQVKIHRERS) is disordered. S1000 bears the Phosphoserine mark.

This sequence belongs to the protein kinase superfamily. Tyr protein kinase family. CSF-1/PDGF receptor subfamily. In terms of assembly, monomer in the absence of bound FLT3LG. Homodimer in the presence of bound FLT3LG. Interacts with FIZ1 following ligand activation. Interacts with FES, FER, LYN, FGR, HCK, SRC and GRB2. Interacts with PTPRJ/DEP-1 and PTPN11/SHP2. Interacts with RNF115 and RNF126. N-glycosylated, contains complex N-glycans with sialic acid. Post-translationally, autophosphorylated on several tyrosine residues in response to FLT3LG binding. FLT3LG binding also increases phosphorylation of mutant kinases that are constitutively activated. Dephosphorylated by PTPRJ/DEP-1, PTPN1, PTPN6/SHP-1, and to a lesser degree by PTPN12. Dephosphorylation is important for export from the endoplasmic reticulum and location at the cell membrane. In terms of processing, rapidly ubiquitinated by UBE2L6 and the E3 ubiquitin-protein ligase SIAH1 after autophosphorylation, leading to its proteasomal degradation. Hematopoietic stem and progenitor cell-enriched populations. Found in brain, placenta and testis.

It localises to the membrane. The protein localises to the endoplasmic reticulum lumen. The enzyme catalyses L-tyrosyl-[protein] + ATP = O-phospho-L-tyrosyl-[protein] + ADP + H(+). With respect to regulation, present in an inactive conformation in the absence of bound ligand. FLT3LG binding leads to dimerization and activation by autophosphorylation. Tyrosine-protein kinase that acts as a cell-surface receptor for the cytokine FLT3LG and regulates differentiation, proliferation and survival of hematopoietic progenitor cells and of dendritic cells. Promotes phosphorylation of SHC1 and AKT1, and activation of the downstream effector MTOR. Promotes activation of RAS signaling and phosphorylation of downstream kinases, including MAPK1/ERK2 and/or MAPK3/ERK1. Promotes phosphorylation of FES, FER, PTPN6/SHP, PTPN11/SHP-2, PLCG1, and STAT5A and/or STAT5B. Activation of wild-type FLT3 causes only marginal activation of STAT5A or STAT5B. Mutations that cause constitutive kinase activity promote cell proliferation and resistance to apoptosis via the activation of multiple signaling pathways. This Mus musculus (Mouse) protein is Receptor-type tyrosine-protein kinase FLT3 (Flt3).